The following is a 345-amino-acid chain: S-adenosylmethionine:tRNA ribosyltransferase-isomerase (345 aa).

This sequence belongs to the QueA family. Monomer.

The protein localises to the cytoplasm. It catalyses the reaction 7-aminomethyl-7-carbaguanosine(34) in tRNA + S-adenosyl-L-methionine = epoxyqueuosine(34) in tRNA + adenine + L-methionine + 2 H(+). Its pathway is tRNA modification; tRNA-queuosine biosynthesis. Transfers and isomerizes the ribose moiety from AdoMet to the 7-aminomethyl group of 7-deazaguanine (preQ1-tRNA) to give epoxyqueuosine (oQ-tRNA). The sequence is that of S-adenosylmethionine:tRNA ribosyltransferase-isomerase from Lactococcus lactis subsp. lactis (strain IL1403) (Streptococcus lactis).